The sequence spans 360 residues: Peptide chain release factor 1 (360 aa).

Glutamine 235 carries the N5-methylglutamine modification. Positions 285–314 (KRQQAEASTRRNLLGSGDRSDRNRTYNFPQ) are disordered.

It belongs to the prokaryotic/mitochondrial release factor family. Methylated by PrmC. Methylation increases the termination efficiency of RF1.

It localises to the cytoplasm. Peptide chain release factor 1 directs the termination of translation in response to the peptide chain termination codons UAG and UAA. In Klebsiella pneumoniae subsp. pneumoniae (strain ATCC 700721 / MGH 78578), this protein is Peptide chain release factor 1.